The sequence spans 535 residues: uncharacterized protein (535 aa).

6 consecutive transmembrane segments (helical) span residues 55–75, 82–102, 115–135, 143–163, 201–221, and 346–366; these read LITI…IPII, FMPV…IMFV, IICF…ILRH, AFVL…LMLF, STIL…TLIM, and VSGP…NVFA.

It is found in the membrane. This is an uncharacterized protein from Schizosaccharomyces pombe (strain 972 / ATCC 24843) (Fission yeast).